The following is a 507-amino-acid chain: Cytochrome P450 monooxygenase cloA (507 aa).

The chain crosses the membrane as a helical span at residues 15 to 35 (WTWILLTTCIALTSPLVLKGI). The N-linked (GlcNAc...) asparagine glycan is linked to Asn-247. Residue Cys-450 participates in heme binding.

Belongs to the cytochrome P450 family. Heme is required as a cofactor.

The protein resides in the membrane. Its pathway is alkaloid biosynthesis; ergot alkaloid biosynthesis. Functionally, cytochrome P450 monooxygenase; part of the gene cluster that mediates the biosynthesis of fungal ergot alkaloid. DmaW catalyzes the first step of ergot alkaloid biosynthesis by condensing dimethylallyl diphosphate (DMAP) and tryptophan to form 4-dimethylallyl-L-tryptophan. The second step is catalyzed by the methyltransferase easF that methylates 4-dimethylallyl-L-tryptophan in the presence of S-adenosyl-L-methionine, resulting in the formation of 4-dimethylallyl-L-abrine. The catalase easC and the FAD-dependent oxidoreductase easE then transform 4-dimethylallyl-L-abrine to chanoclavine-I which is further oxidized by easD in the presence of NAD(+), resulting in the formation of chanoclavine-I aldehyde. Agroclavine dehydrogenase easG then mediates the conversion of chanoclavine-I aldehyde to agroclavine via a non-enzymatic adduct reaction: the substrate is an iminium intermediate that is formed spontaneously from chanoclavine-I aldehyde in the presence of glutathione. The presence of easA is not required to complete this reaction. Further conversion of agroclavine to paspalic acid is a two-step process involving oxidation of agroclavine to elymoclavine and of elymoclavine to paspalic acid, the second step being performed by the elymoclavine oxidase cloA. Paspalic acid is then further converted to D-lysergic acid. Ergopeptines are assembled from D-lysergic acid and three different amino acids by the D-lysergyl-peptide-synthetases composed each of a monomudular and a trimodular nonribosomal peptide synthetase subunit. LpsB and lpsC encode the monomodular subunits responsible for D-lysergic acid activation and incorporation into the ergopeptine backbone. LpsA1 and A2 subunits encode the trimodular nonribosomal peptide synthetase assembling the tripeptide portion of ergopeptines. LpsA1 is responsible for formation of the major ergopeptine, ergotamine, and lpsA2 for alpha-ergocryptine, the minor ergopeptine of the total alkaloid mixture elaborated by C.purpurea. D-lysergyl-tripeptides are assembled by the nonribosomal peptide synthetases and released as N-(D-lysergyl-aminoacyl)-lactams. Cyclolization of the D-lysergyl-tripeptides is performed by the Fe(2+)/2-ketoglutarate-dependent dioxygenase easH which introduces a hydroxyl group into N-(D-lysergyl-aminoacyl)-lactam at alpha-C of the aminoacyl residue followed by spontaneous condensation with the terminal lactam carbonyl group. The protein is Cytochrome P450 monooxygenase cloA of Claviceps purpurea (Ergot fungus).